A 247-amino-acid polypeptide reads, in one-letter code: Carboxy-S-adenosyl-L-methionine synthase (247 aa).

S-adenosyl-L-methionine-binding positions include Y39, 64 to 66, 89 to 90, 117 to 118, N132, and R199; these read GCS, DN, and DI.

The protein belongs to the class I-like SAM-binding methyltransferase superfamily. Cx-SAM synthase family. Homodimer.

It catalyses the reaction prephenate + S-adenosyl-L-methionine = carboxy-S-adenosyl-L-methionine + 3-phenylpyruvate + H2O. Its function is as follows. Catalyzes the conversion of S-adenosyl-L-methionine (SAM) to carboxy-S-adenosyl-L-methionine (Cx-SAM). The sequence is that of Carboxy-S-adenosyl-L-methionine synthase from Shigella boydii serotype 4 (strain Sb227).